The primary structure comprises 339 residues: Methionine import ATP-binding protein MetN 2 (339 aa).

Residues 2-241 enclose the ABC transporter domain; the sequence is ISFNNVSKVY…PKTTTTQNFV (240 aa). 38–45 serves as a coordination point for ATP; the sequence is GFSGAGKS.

This sequence belongs to the ABC transporter superfamily. Methionine importer (TC 3.A.1.24) family. As to quaternary structure, the complex is composed of two ATP-binding proteins (MetN), two transmembrane proteins (MetI) and a solute-binding protein (MetQ).

The protein resides in the cell membrane. It carries out the reaction L-methionine(out) + ATP + H2O = L-methionine(in) + ADP + phosphate + H(+). The enzyme catalyses D-methionine(out) + ATP + H2O = D-methionine(in) + ADP + phosphate + H(+). Part of the ABC transporter complex MetNIQ involved in methionine import. Responsible for energy coupling to the transport system. This chain is Methionine import ATP-binding protein MetN 2, found in Bacillus anthracis.